We begin with the raw amino-acid sequence, 474 residues long: Trifunctional enzyme subunit beta, mitochondrial (474 aa).

Residues 1-33 constitute a mitochondrion transit peptide; that stretch reads MTILTYPFKNLPTASKWALRFSIRPLSCSSQLR. Residue Lys-72 is modified to N6-acetyllysine; alternate. Residue Lys-72 is modified to N6-succinyllysine; alternate. The active-site Acyl-thioester intermediate is Cys-138. The stretch at 173–220 is an intramembrane region; that stretch reads IRHSRKMRKLMLDLNKAKSMGQRLSLISKFRFNFLAPELPAVSEFSTS. N6-acetyllysine; alternate is present on Lys-188. Lys-188 carries the N6-succinyllysine; alternate modification. 3 positions are modified to N6-succinyllysine: Lys-190, Lys-272, and Lys-291. At Lys-293 the chain carries N6-acetyllysine; alternate. Lys-293 bears the N6-succinyllysine; alternate mark. Residue Lys-298 is modified to N6-acetyllysine. N6-acetyllysine; alternate is present on Lys-332. Lys-332 bears the N6-succinyllysine; alternate mark. N6-acetyllysine is present on residues Lys-348 and Lys-361. Cys-458 functions as the Proton donor/acceptor in the catalytic mechanism.

This sequence belongs to the thiolase-like superfamily. Thiolase family. Heterotetramer of 2 alpha/HADHA and 2 beta/HADHB subunits; forms the mitochondrial trifunctional enzyme. Also purified as higher order heterooligomers including a 4 alpha/HADHA and 4 beta/HADHB heterooligomer which physiological significance remains unclear. The mitochondrial trifunctional enzyme interacts with MTLN. Interacts with RSAD2/viperin.

The protein localises to the mitochondrion. It is found in the mitochondrion inner membrane. Its subcellular location is the mitochondrion outer membrane. It localises to the endoplasmic reticulum. The catalysed reaction is an acyl-CoA + acetyl-CoA = a 3-oxoacyl-CoA + CoA. It catalyses the reaction butanoyl-CoA + acetyl-CoA = 3-oxohexanoyl-CoA + CoA. The enzyme catalyses hexanoyl-CoA + acetyl-CoA = 3-oxooctanoyl-CoA + CoA. It carries out the reaction octanoyl-CoA + acetyl-CoA = 3-oxodecanoyl-CoA + CoA. The catalysed reaction is decanoyl-CoA + acetyl-CoA = 3-oxododecanoyl-CoA + CoA. It catalyses the reaction dodecanoyl-CoA + acetyl-CoA = 3-oxotetradecanoyl-CoA + CoA. The enzyme catalyses tetradecanoyl-CoA + acetyl-CoA = 3-oxohexadecanoyl-CoA + CoA. It functions in the pathway lipid metabolism; fatty acid beta-oxidation. In terms of biological role, mitochondrial trifunctional enzyme catalyzes the last three of the four reactions of the mitochondrial beta-oxidation pathway. The mitochondrial beta-oxidation pathway is the major energy-producing process in tissues and is performed through four consecutive reactions breaking down fatty acids into acetyl-CoA. Among the enzymes involved in this pathway, the trifunctional enzyme exhibits specificity for long-chain fatty acids. Mitochondrial trifunctional enzyme is a heterotetrameric complex composed of two proteins, the trifunctional enzyme subunit alpha/HADHA carries the 2,3-enoyl-CoA hydratase and the 3-hydroxyacyl-CoA dehydrogenase activities, while the trifunctional enzyme subunit beta/HADHB described here bears the 3-ketoacyl-CoA thiolase activity. In Homo sapiens (Human), this protein is Trifunctional enzyme subunit beta, mitochondrial (HADHB).